The following is a 249-amino-acid chain: UPF0246 protein EUBREC_1226 (249 aa).

It belongs to the UPF0246 family.

The chain is UPF0246 protein EUBREC_1226 from Agathobacter rectalis (strain ATCC 33656 / DSM 3377 / JCM 17463 / KCTC 5835 / VPI 0990) (Eubacterium rectale).